The primary structure comprises 560 residues: Kinesin light chain 1 (560 aa).

Residues Val31 to Val99 are a coiled coil. Over residues Lys155 to Leu176 the composition is skewed to basic and acidic residues. A disordered region spans residues Lys155–Gln203. Ser162 carries the phosphoserine modification. Over residues Gln192–Gln203 the composition is skewed to low complexity. TPR repeat units lie at residues Leu213–Thr246, Ala255–Thr288, Ala297–Val330, Ala339–Lys372, and Ala381–Arg414. Position 449 is a phosphotyrosine (Tyr449). Position 460 is a phosphoserine (Ser460). The stretch at Thr464 to Gly497 is one TPR 6 repeat. Phosphoserine; by AMPK occurs at positions 521 and 524.

It belongs to the kinesin light chain family. Oligomeric complex composed of two heavy chains and two light chains. Interacts with SPAG9. Interacts with ATCAY; may link mitochondria to KLC1 and regulate mitochondria localization into neuron projections. Interacts (via TPR repeats) with TOR1A; the interaction associates TOR1A with the kinesin oligomeric complex. Interacts with BORCS5. Interacts with MAPK8IP3/JIP3 and NTRK2/TRKB; interaction with NTRK2/TRKB is mediated by MAPK8IP3/JIP3. Interacts with CLSTN1; phosphorylation at Ser-460 inhibits interaction with CLSTN1. Post-translationally, phosphorylation at Ser-460 by ERK inhibits interaction with CLSTN1 and localization to cytoplasmic vesicles.

It is found in the cell projection. It localises to the growth cone. The protein localises to the cytoplasmic vesicle. Its subcellular location is the cytoplasm. The protein resides in the cytoskeleton. Kinesin is a microtubule-associated force-producing protein that may play a role in organelle transport. The light chain may function in coupling of cargo to the heavy chain or in the modulation of its ATPase activity. The polypeptide is Kinesin light chain 1 (KLC1) (Pongo abelii (Sumatran orangutan)).